We begin with the raw amino-acid sequence, 348 residues long: MVRTINETFLKACRGERTDYVPAWYMRQAGRSQPEYRKIKEKYSLFEITHNPELCAYVTKLPVDQYNVDAAILYKDIMSPLPAIGVDVEIKSGIGPVIDNPIRSLQDVEKLGEINPEDDVPYILDTIRLLTTEMLDVPLIGFSGAPFTLASYMIEGGPSRNYHNTKAFMYAEPKAWFALIDKLADMVITYLKAQINAGAKAVQIFDSWVGTVNVADYRVFIKPAMERIFAEVRTMGVPMIMHGVGAAHLVNEWHDLPLDVVGLDWRLPIEEARARGVHKAVQGNMDPSFLLAPWSVIEEHVKGILDQGMKQPGYIFNLGHGVFPEVNPDTLKRLTTFIHEYSKGQLAK.

Substrate contacts are provided by residues 27-31 (RQAGR), phenylalanine 46, aspartate 76, tyrosine 152, serine 207, and histidine 320.

The protein belongs to the uroporphyrinogen decarboxylase family. Homodimer.

The protein localises to the cytoplasm. The enzyme catalyses uroporphyrinogen III + 4 H(+) = coproporphyrinogen III + 4 CO2. The protein operates within porphyrin-containing compound metabolism; protoporphyrin-IX biosynthesis; coproporphyrinogen-III from 5-aminolevulinate: step 4/4. In terms of biological role, catalyzes the decarboxylation of four acetate groups of uroporphyrinogen-III to yield coproporphyrinogen-III. This is Uroporphyrinogen decarboxylase from Bacillus anthracis.